The sequence spans 271 residues: Thiazole synthase (271 aa).

Lys-104 (schiff-base intermediate with DXP) is an active-site residue. 1-deoxy-D-xylulose 5-phosphate-binding positions include Gly-165, 192-193 (AG), and 214-215 (NT).

The protein belongs to the ThiG family. In terms of assembly, homotetramer. Forms heterodimers with either ThiH or ThiS.

It localises to the cytoplasm. It catalyses the reaction [ThiS sulfur-carrier protein]-C-terminal-Gly-aminoethanethioate + 2-iminoacetate + 1-deoxy-D-xylulose 5-phosphate = [ThiS sulfur-carrier protein]-C-terminal Gly-Gly + 2-[(2R,5Z)-2-carboxy-4-methylthiazol-5(2H)-ylidene]ethyl phosphate + 2 H2O + H(+). It functions in the pathway cofactor biosynthesis; thiamine diphosphate biosynthesis. Functionally, catalyzes the rearrangement of 1-deoxy-D-xylulose 5-phosphate (DXP) to produce the thiazole phosphate moiety of thiamine. Sulfur is provided by the thiocarboxylate moiety of the carrier protein ThiS. In vitro, sulfur can be provided by H(2)S. This Burkholderia thailandensis (strain ATCC 700388 / DSM 13276 / CCUG 48851 / CIP 106301 / E264) protein is Thiazole synthase.